Here is a 1068-residue protein sequence, read N- to C-terminus: Protein AF-10 (1068 aa).

Residues 22-74 (IGGCCVCSDERGWAENPLVYCDGHGCSVAVHQACYGIVQVPTGPWFCRKCESQ) form a PHD-type 1 zinc finger. The segment at 79–112 (RVRCELCPHKDGALKRTDNGGWAHVVCALYIPEV) adopts a C2HC pre-PHD-type zinc-finger fold. The interval 106 to 190 (ALYIPEVQFA…EGNGADNVQY (85 aa)) is required for interaction with histone H3. The PHD-type 2 zinc-finger motif lies at 135–198 (KTCYICDEQG…QYCGYCKYHF (64 aa)). The tract at residues 207–260 (GSNRSYEQSLSDSSSHSQDKHHEKEKKKYKEKDKHKQKHKKQPEPSPALVPSLT) is disordered. The residue at position 217 (S217) is a Phosphoserine. The segment covering 223 to 240 (SQDKHHEKEKKKYKEKDK) has biased composition (basic and acidic residues). S252 is subject to Phosphoserine. Residue K280 forms a Glycyl lysine isopeptide (Lys-Gly) (interchain with G-Cter in SUMO2) linkage. Residues 296 to 305 (EVSAHTSSGK) show a composition bias toward polar residues. 2 disordered regions span residues 296 to 416 (EVSA…SFSS) and 428 to 506 (SQPK…SVAS). The segment covering 306 to 317 (DVSEARGSEGKG) has biased composition (basic and acidic residues). The segment covering 340 to 351 (TAVSASSPFPQG) has biased composition (polar residues). Over residues 352–372 (SFSGTPGSVKSSSGSSVQSPQ) the composition is skewed to low complexity. 3 stretches are compositionally biased toward polar residues: residues 387–396 (YTHTQQPSST), 404–416 (SGSQ…SFSS), and 428–446 (SQPK…SSLP). S436 is modified (phosphoserine). The span at 465–483 (EKKRKGNKQSKHGPGRPKG) shows a compositional bias: basic residues. The span at 490-506 (VSHLSVSSASPTSSVAS) shows a compositional bias: low complexity. At S532 the chain carries Phosphoserine. The segment covering 583–594 (SGSGSSTPVSSS) has biased composition (low complexity). 2 disordered regions span residues 583–613 (SGSG…LSPS) and 660–698 (SESS…NLQL). Polar residues predominate over residues 595–604 (HIPQQSSGHL). Residues 681 to 692 (SSPRGSLSPRSP) show a composition bias toward low complexity. S686, S688, and S691 each carry phosphoserine. The leucine-zipper stretch occupies residues 752 to 780 (LQVENRRLEEQIKNLTAKKERLQLLNAQL). Disordered regions lie at residues 786 to 869 (AITT…VSGV) and 1040 to 1068 (PFLT…QEKS). Over residues 787–816 (ITTNPSPSHQMHTYTAQTAPPPDSLNSSKS) the composition is skewed to polar residues. Composition is skewed to low complexity over residues 836 to 850 (LTSS…SALS) and 857 to 869 (QSPA…VSGV). Positions 1040–1054 (PFLTIHGDSTSQKVT) are enriched in polar residues.

In terms of assembly, self-associates. Interacts with FSTL3; the interaction enhances MLLT10 in vitro transcriptional activity and self-association. Interacts with YEATS4. Interacts with SS18. Interacts with DOT1L. Interacts with histone H3; interaction is necessary for MLLT10 binding to nucleosomes; interaction is inhibited by histone H3 'Lys-27' methylations (H3K27me1, H3K27me2 and H3K27me3) amd acetylation; interaction stabilizes association of MLLT10 at chromatin; interaction is essential for histone H3 'Lys-79' dimethylation (H3K79me2).

Its subcellular location is the nucleus. Probably involved in transcriptional regulation. Binds to cruciform DNA. In cells, binding to unmodified histone H3 regulates DOT1L functions including histone H3 'Lys-79' dimethylation (H3K79me2) and gene activation. This is Protein AF-10 from Mus musculus (Mouse).